Here is a 158-residue protein sequence, read N- to C-terminus: Glutathione peroxidase homolog BsaA (158 aa).

The active site involves T36.

It belongs to the glutathione peroxidase family.

In Staphylococcus epidermidis (strain ATCC 35984 / DSM 28319 / BCRC 17069 / CCUG 31568 / BM 3577 / RP62A), this protein is Glutathione peroxidase homolog BsaA (bsaA).